Consider the following 388-residue polypeptide: Processive diacylglycerol beta-glucosyltransferase (388 aa).

It belongs to the glycosyltransferase 28 family. UgtP subfamily.

Its subcellular location is the cell membrane. The catalysed reaction is a 1,2-diacyl-3-O-(beta-D-glucopyranosyl)-sn-glycerol + UDP-alpha-D-glucose = a 1,2-diacyl-3-O-(beta-D-Glc-(1-&gt;6)-beta-D-Glc)-sn-glycerol + UDP + H(+). The enzyme catalyses a 1,2-diacyl-3-O-(beta-D-Glc-(1-&gt;6)-beta-D-Glc)-sn-glycerol + UDP-alpha-D-glucose = a 1,2-diacyl-3-O-(beta-D-Glc-(1-&gt;6)-beta-D-Glc-(1-&gt;6)-beta-D-Glc)-sn-glycerol + UDP + H(+). It carries out the reaction a 1,2-diacyl-sn-glycerol + UDP-alpha-D-glucose = a 1,2-diacyl-3-O-(beta-D-glucopyranosyl)-sn-glycerol + UDP + H(+). It participates in glycolipid metabolism; diglucosyl-diacylglycerol biosynthesis. Functionally, processive glucosyltransferase involved in the biosynthesis of both the bilayer- and non-bilayer-forming membrane glucolipids. Is able to successively transfer up to three glucosyl residues to diacylglycerol (DAG), thereby catalyzing the formation of beta-monoglucosyl-DAG (3-O-(beta-D-glucopyranosyl)-1,2-diacyl-sn-glycerol), beta-diglucosyl-DAG (3-O-(beta-D-glucopyranosyl-beta-(1-&gt;6)-D-glucopyranosyl)-1,2-diacyl-sn-glycerol) and beta-triglucosyl-DAG (3-O-(beta-D-glucopyranosyl-beta-(1-&gt;6)-D-glucopyranosyl-beta-(1-&gt;6)-D-glucopyranosyl)-1,2-diacyl-sn-glycerol). Beta-diglucosyl-DAG is the predominant glycolipid found in Bacillales and is also used as a membrane anchor for lipoteichoic acid (LTA). In Bacillus cereus (strain ZK / E33L), this protein is Processive diacylglycerol beta-glucosyltransferase.